Here is a 397-residue protein sequence, read N- to C-terminus: MSAAIYLVKGREKSVVRRHPWIFSRGIDRVEGNPQLGETVDVYGHDGKWLAKAAYSPESQIRARVWSFEKQDINRAFFVKRIQDAQLLREDVIERDGLTGYRLIAAESDGMPGVTIDRYQNFFVCQLLSAGAEHQKQNIVDALIEVFPDCNVYERSDVSVRKKEGLQETTGVLHGEMPPKSVVIEENGVKISVDIVGGHKTGFYLDQRDSRQQAMKYVKDKEVLNCFSYTGGFGLYALKGGAKRVINADVSQPALDTAKFNAELNEFDISKKRAVFLNADVFKLLREYRDQGTKFDVVIMDPPKFAESKAQLNGACRGYKDINMLAFEILKSGGTLLTYSCSGLMDLALFQKIIADAAVDAGRTVKFVERFEQAADHPVDTAYPEGFYLKGFACKVI.

One can recognise a PUA domain in the interval 2-80; the sequence is SAAIYLVKGR…QDINRAFFVK (79 aa).

Belongs to the methyltransferase superfamily. RlmI family.

The protein localises to the cytoplasm. It catalyses the reaction cytidine(1962) in 23S rRNA + S-adenosyl-L-methionine = 5-methylcytidine(1962) in 23S rRNA + S-adenosyl-L-homocysteine + H(+). In terms of biological role, specifically methylates the cytosine at position 1962 (m5C1962) of 23S rRNA. The sequence is that of Ribosomal RNA large subunit methyltransferase I from Vibrio vulnificus (strain CMCP6).